Here is a 262-residue protein sequence, read N- to C-terminus: NADP-dependent mannitol dehydrogenase (262 aa).

NADP(+)-binding residues include Ile-23, Asp-69, Asn-96, and Arg-129. The active-site Proton donor is Ser-149. The NADP(+) site is built by Tyr-169, Lys-173, Val-202, Thr-204, and Gln-206. Tyr-169 (proton acceptor) is an active-site residue. Lys-173 functions as the Lowers pKa of active site Tyr in the catalytic mechanism.

Belongs to the short-chain dehydrogenases/reductases (SDR) family. As to quaternary structure, homotetramer.

It catalyses the reaction D-mannitol + NADP(+) = D-fructose + NADPH + H(+). The polypeptide is NADP-dependent mannitol dehydrogenase (mtdH) (Agaricus bisporus (White button mushroom)).